A 156-amino-acid chain; its full sequence is Ribonuclease H (156 aa).

One can recognise an RNase H type-1 domain in the interval threonine 2–serine 144. Mg(2+)-binding residues include aspartate 11, glutamate 49, aspartate 71, and aspartate 136.

This sequence belongs to the RNase H family. In terms of assembly, monomer. It depends on Mg(2+) as a cofactor.

The protein localises to the cytoplasm. It catalyses the reaction Endonucleolytic cleavage to 5'-phosphomonoester.. Endonuclease that specifically degrades the RNA of RNA-DNA hybrids. In Nitratidesulfovibrio vulgaris (strain DSM 19637 / Miyazaki F) (Desulfovibrio vulgaris), this protein is Ribonuclease H.